A 254-amino-acid polypeptide reads, in one-letter code: Pimeloyl-[acyl-carrier protein] methyl ester esterase (254 aa).

Substrate is bound by residues W20, 80–81 (SL), and 141–145 (FLALQ). Residue S80 is the Nucleophile of the active site. Residues D205 and H233 contribute to the active site. H233 contributes to the substrate binding site.

Belongs to the AB hydrolase superfamily. Carboxylesterase BioH family. Monomer.

Its subcellular location is the cytoplasm. The enzyme catalyses 6-carboxyhexanoyl-[ACP] methyl ester + H2O = 6-carboxyhexanoyl-[ACP] + methanol + H(+). It functions in the pathway cofactor biosynthesis; biotin biosynthesis. Its function is as follows. The physiological role of BioH is to remove the methyl group introduced by BioC when the pimeloyl moiety is complete. It allows to synthesize pimeloyl-ACP via the fatty acid synthetic pathway through the hydrolysis of the ester bonds of pimeloyl-ACP esters. The chain is Pimeloyl-[acyl-carrier protein] methyl ester esterase from Methylococcus capsulatus (strain ATCC 33009 / NCIMB 11132 / Bath).